Reading from the N-terminus, the 127-residue chain is Large ribosomal subunit protein bL12 (127 aa).

The protein belongs to the bacterial ribosomal protein bL12 family. Homodimer. Part of the ribosomal stalk of the 50S ribosomal subunit. Forms a multimeric L10(L12)X complex, where L10 forms an elongated spine to which 2 to 4 L12 dimers bind in a sequential fashion. Binds GTP-bound translation factors.

Functionally, forms part of the ribosomal stalk which helps the ribosome interact with GTP-bound translation factors. Is thus essential for accurate translation. This is Large ribosomal subunit protein bL12 from Caulobacter vibrioides (strain ATCC 19089 / CIP 103742 / CB 15) (Caulobacter crescentus).